We begin with the raw amino-acid sequence, 1953 residues long: TATA-binding protein-associated factor mot1 (1953 aa).

The stretch at 36 to 74 (PDELYNLLGRVVPYLKSKNWDTRVAAAKAIGGIVENVPV) is one HEAT 1 repeat. The interval 79-141 (RTSPVKKEET…KLEEERLSTR (63 aa)) is disordered. Positions 98-108 (TEEKPFIKTEE) are enriched in basic and acidic residues. The span at 113–130 (SSQSQVVVSSNLTSNSEV) shows a compositional bias: low complexity. Residues 131 to 141 (SKLEEERLSTR) show a composition bias toward basic and acidic residues. Ser144 is subject to Phosphoserine. Residues 240 to 278 (DNVGSNSKGSPTTSIPEHKTSINNNKPEDTPTPSENVHL) form a disordered region. Positions 242–276 (VGSNSKGSPTTSIPEHKTSINNNKPEDTPTPSENV) are enriched in polar residues. HEAT repeat units lie at residues 358-396 (VWPFETLVELLLIDMFDPSWEIRHGACMGLREIIRYAGF), 513-551 (SDYLDSLINTVIHGLANHDDDVRAVSALTLLPIADKLVQ), 554-592 (LSSCKNLLKVLWDCLDDVKDDLSSSTSCVMDLLSSLCSF), and 608-646 (EFSFETLVPRLFHLMRYTLTGVRRSVVYALTKFISVQTS). 2 disordered regions span residues 730–762 (SGQPYAPSTSRERNNNISELSNSRTKHRAKDDP) and 1078–1103 (DDNDEQVSGKLVDDSDDVSNDRKSSL). HEAT repeat units follow at residues 1191 to 1229 (QSEIVSTLPHLLATLQSNYSAVRNMASKCFAAITESNAA) and 1270 to 1311 (VRIL…LVPL). The Helicase ATP-binding domain maps to 1370–1543 (AFLNKYELHG…WSLFDFLMPG (174 aa)). 1383–1390 (DDMGLGKT) contacts ATP. Positions 1494-1497 (DEGH) match the DEGH box motif. An HEAT 8 repeat occupies 1580–1623 (EAIHKQVLPFMLRRLKEDVLADLPPKIIQDYYCDMSDLQRKLLN). The region spanning 1725–1877 (GIDSALTNAV…STVVNQQNAG (153 aa)) is the Helicase C-terminal domain. Positions 1901-1920 (QNIDKEESEDAAGRGLSGTS) are disordered.

This sequence belongs to the SNF2/RAD54 helicase family. As to quaternary structure, forms a complex with TBP which binds TATA DNA.

The protein localises to the nucleus. Its function is as follows. Regulates transcription in association with TATA binding protein (TBP). Removes TBP from the TATA box via its ATPase activity. The sequence is that of TATA-binding protein-associated factor mot1 from Schizosaccharomyces pombe (strain 972 / ATCC 24843) (Fission yeast).